The following is a 291-amino-acid chain: Diaminopimelate epimerase (291 aa).

2 residues coordinate substrate: Asn11 and Asn78. The Proton donor role is filled by Cys87. Substrate contacts are provided by residues 88–89 (GN), Asn166, Asn200, and 218–219 (ER). The Proton acceptor role is filled by Cys227. A substrate-binding site is contributed by 228–229 (GT).

Belongs to the diaminopimelate epimerase family. Homodimer.

The protein resides in the cytoplasm. The catalysed reaction is (2S,6S)-2,6-diaminopimelate = meso-2,6-diaminopimelate. The protein operates within amino-acid biosynthesis; L-lysine biosynthesis via DAP pathway; DL-2,6-diaminopimelate from LL-2,6-diaminopimelate: step 1/1. In terms of biological role, catalyzes the stereoinversion of LL-2,6-diaminopimelate (L,L-DAP) to meso-diaminopimelate (meso-DAP), a precursor of L-lysine and an essential component of the bacterial peptidoglycan. This Mycolicibacterium smegmatis (strain ATCC 700084 / mc(2)155) (Mycobacterium smegmatis) protein is Diaminopimelate epimerase.